We begin with the raw amino-acid sequence, 129 residues long: Large ribosomal subunit protein bL17 (129 aa).

It belongs to the bacterial ribosomal protein bL17 family. Part of the 50S ribosomal subunit. Contacts protein L32.

The polypeptide is Large ribosomal subunit protein bL17 (Polynucleobacter asymbioticus (strain DSM 18221 / CIP 109841 / QLW-P1DMWA-1) (Polynucleobacter necessarius subsp. asymbioticus)).